Reading from the N-terminus, the 208-residue chain is Holliday junction branch migration complex subunit RuvA (208 aa).

Residues 1–63 (MIGMLTGRVE…QDAITLHGFL (63 aa)) are domain I. The interval 64–142 (DRDAKKTFLQ…LSQIEGASAQ (79 aa)) is domain II. The tract at residues 143 to 151 (AATSKSPVD) is flexible linker. The interval 151 to 208 (DTGTEQVVEGLISLGWRQQDAQQAVAEACAENDIPTPLATDDVPRVLRLALALMDRGR) is domain III.

The protein belongs to the RuvA family. As to quaternary structure, homotetramer. Forms an RuvA(8)-RuvB(12)-Holliday junction (HJ) complex. HJ DNA is sandwiched between 2 RuvA tetramers; dsDNA enters through RuvA and exits via RuvB. An RuvB hexamer assembles on each DNA strand where it exits the tetramer. Each RuvB hexamer is contacted by two RuvA subunits (via domain III) on 2 adjacent RuvB subunits; this complex drives branch migration. In the full resolvosome a probable DNA-RuvA(4)-RuvB(12)-RuvC(2) complex forms which resolves the HJ.

The protein resides in the cytoplasm. Its function is as follows. The RuvA-RuvB-RuvC complex processes Holliday junction (HJ) DNA during genetic recombination and DNA repair, while the RuvA-RuvB complex plays an important role in the rescue of blocked DNA replication forks via replication fork reversal (RFR). RuvA specifically binds to HJ cruciform DNA, conferring on it an open structure. The RuvB hexamer acts as an ATP-dependent pump, pulling dsDNA into and through the RuvAB complex. HJ branch migration allows RuvC to scan DNA until it finds its consensus sequence, where it cleaves and resolves the cruciform DNA. The polypeptide is Holliday junction branch migration complex subunit RuvA (Bifidobacterium longum (strain DJO10A)).